The chain runs to 328 residues: Pantothenate kinase (328 aa).

Residues 1–12 (MAAPLNAQTRAP) show a composition bias toward polar residues. A disordered region spans residues 1-22 (MAAPLNAQTRAPQATGRAPDFS). 113-120 (GSVAVGKS) serves as a coordination point for ATP.

It belongs to the prokaryotic pantothenate kinase family.

The protein localises to the cytoplasm. The catalysed reaction is (R)-pantothenate + ATP = (R)-4'-phosphopantothenate + ADP + H(+). It functions in the pathway cofactor biosynthesis; coenzyme A biosynthesis; CoA from (R)-pantothenate: step 1/5. The chain is Pantothenate kinase from Corynebacterium efficiens (strain DSM 44549 / YS-314 / AJ 12310 / JCM 11189 / NBRC 100395).